Reading from the N-terminus, the 320-residue chain is Aspartate carbamoyltransferase catalytic subunit (320 aa).

The carbamoyl phosphate site is built by arginine 68 and threonine 69. Lysine 96 is a binding site for L-aspartate. Carbamoyl phosphate contacts are provided by arginine 118, histidine 148, and glutamine 151. The L-aspartate site is built by arginine 181 and arginine 236. Positions 277 and 278 each coordinate carbamoyl phosphate.

The protein belongs to the aspartate/ornithine carbamoyltransferase superfamily. ATCase family. Heterododecamer (2C3:3R2) of six catalytic PyrB chains organized as two trimers (C3), and six regulatory PyrI chains organized as three dimers (R2).

It catalyses the reaction carbamoyl phosphate + L-aspartate = N-carbamoyl-L-aspartate + phosphate + H(+). It functions in the pathway pyrimidine metabolism; UMP biosynthesis via de novo pathway; (S)-dihydroorotate from bicarbonate: step 2/3. Functionally, catalyzes the condensation of carbamoyl phosphate and aspartate to form carbamoyl aspartate and inorganic phosphate, the committed step in the de novo pyrimidine nucleotide biosynthesis pathway. The polypeptide is Aspartate carbamoyltransferase catalytic subunit (Leptothrix cholodnii (strain ATCC 51168 / LMG 8142 / SP-6) (Leptothrix discophora (strain SP-6))).